Consider the following 269-residue polypeptide: 4-hydroxy-tetrahydrodipicolinate reductase (269 aa).

NAD(+) is bound by residues 8-13 and Glu-34; that span reads GAAGRM. Residue Arg-35 coordinates NADP(+). NAD(+) is bound by residues 98 to 100 and 122 to 125; these read GTT and APNY. The Proton donor/acceptor role is filled by His-155. Position 156 (His-156) interacts with (S)-2,3,4,5-tetrahydrodipicolinate. Residue Lys-159 is the Proton donor of the active site. 165 to 166 is a (S)-2,3,4,5-tetrahydrodipicolinate binding site; the sequence is GT.

This sequence belongs to the DapB family.

It is found in the cytoplasm. It carries out the reaction (S)-2,3,4,5-tetrahydrodipicolinate + NAD(+) + H2O = (2S,4S)-4-hydroxy-2,3,4,5-tetrahydrodipicolinate + NADH + H(+). It catalyses the reaction (S)-2,3,4,5-tetrahydrodipicolinate + NADP(+) + H2O = (2S,4S)-4-hydroxy-2,3,4,5-tetrahydrodipicolinate + NADPH + H(+). It functions in the pathway amino-acid biosynthesis; L-lysine biosynthesis via DAP pathway; (S)-tetrahydrodipicolinate from L-aspartate: step 4/4. Catalyzes the conversion of 4-hydroxy-tetrahydrodipicolinate (HTPA) to tetrahydrodipicolinate. The polypeptide is 4-hydroxy-tetrahydrodipicolinate reductase (Vibrio vulnificus (strain CMCP6)).